The sequence spans 475 residues: ATP synthase subunit beta (475 aa).

155–162 (GGAGVGKT) is a binding site for ATP.

The protein belongs to the ATPase alpha/beta chains family. In terms of assembly, F-type ATPases have 2 components, CF(1) - the catalytic core - and CF(0) - the membrane proton channel. CF(1) has five subunits: alpha(3), beta(3), gamma(1), delta(1), epsilon(1). CF(0) has three main subunits: a(1), b(2) and c(9-12). The alpha and beta chains form an alternating ring which encloses part of the gamma chain. CF(1) is attached to CF(0) by a central stalk formed by the gamma and epsilon chains, while a peripheral stalk is formed by the delta and b chains.

It localises to the cell inner membrane. The catalysed reaction is ATP + H2O + 4 H(+)(in) = ADP + phosphate + 5 H(+)(out). Functionally, produces ATP from ADP in the presence of a proton gradient across the membrane. The catalytic sites are hosted primarily by the beta subunits. This Rhizobium etli (strain ATCC 51251 / DSM 11541 / JCM 21823 / NBRC 15573 / CFN 42) protein is ATP synthase subunit beta.